A 527-amino-acid chain; its full sequence is Glutamate--cysteine ligase (527 aa).

It belongs to the glutamate--cysteine ligase type 1 family. Type 1 subfamily.

The catalysed reaction is L-cysteine + L-glutamate + ATP = gamma-L-glutamyl-L-cysteine + ADP + phosphate + H(+). It functions in the pathway sulfur metabolism; glutathione biosynthesis; glutathione from L-cysteine and L-glutamate: step 1/2. In Bordetella parapertussis (strain 12822 / ATCC BAA-587 / NCTC 13253), this protein is Glutamate--cysteine ligase.